Here is a 619-residue protein sequence, read N- to C-terminus: Bifunctional glutathionylspermidine synthetase/amidase (619 aa).

The tract at residues 2 to 195 is gsp amidase; the sequence is SKGTTSQDAP…LGWMIQTEDT (194 aa). The region spanning 34–176 is the Peptidase C51 domain; the sequence is DPQEYEDDAV…MVVENGCYTL (143 aa). Q58 provides a ligand contact to glutathionylspermidine. The active-site S-(gamma-glutamyl-cysteinyl-glycyl)-cysteine intermediate is the C59. C59 bears the Cysteine sulfenic acid (-SOH); transient mark. Glutathionylspermidine is bound by residues R64, 78–81, and N149; that span reads VGMA. Positions 196 to 205 are linker; the sequence is EYSLPQPEIA. Positions 206–619 are gsp synthetase; that stretch reads GELLKISGAR…DIEPLIVVKK (414 aa). R316 is a glutathione binding site. Position 316–318 (316–318) interacts with ATP; sequence RMD. Mg(2+)-binding residues include D318, E330, and N332. Residue S335 participates in glutathione binding. Residue E391 coordinates spermidine. Positions 392 and 446 each coordinate glutathione. ATP-binding positions include K498, K533, 539–540, 568–571, Q582, and 603–605; these read CG, QQLW, and LVI. Position 610 (D610) interacts with spermidine.

In the C-terminal section; belongs to the glutathionylspermidine synthase preATP-grasp family. In terms of assembly, homodimer. Post-translationally, oxidation of Cys-59 to sulfenic acid during oxidative stress selectively inhibits the amidase activity which leads to a rapid increase in the amounts of intracellular Gsp and Gsp S-thiolated proteins (GspSSPs).

The enzyme catalyses spermidine + glutathione + ATP = glutathionylspermidine + ADP + phosphate + H(+). It carries out the reaction glutathionylspermidine + H2O = spermidine + glutathione. The protein operates within sulfur metabolism; glutathione metabolism. It participates in amine and polyamine metabolism; spermidine metabolism. With respect to regulation, when exposed to oxidative stress, Gsp amidase activity is transiently inhibited in vivo by oxidation of the catalytic Cys-59 thiol to sulfenic acid; this modification does not affect Gsp synthetase activity. Gsp amidase activity is negatively autoregulated by the Gsp synthetase domain, and is activated by the Gsp synthetase substrates, GSH and ATP-Mg(2+); the occupancy of the synthetase active site may initiate communication through the protein as manifest by the release of inhibition of the amidase activity. A tetrahedral phosphonate analog of glutathionylspermidine, designed as a mimic of the proposed tetrahedral intermediate for either reaction, inhibits the synthetase activity (Ki of 10 uM) but does not inhibit the amidase activity. Amidase activity is inhibited by iodoacetamide in vitro. Its function is as follows. Catalyzes the formation of an amide bond between glutathione (GSH) and spermidine coupled with hydrolysis of ATP; also catalyzes the opposing reaction, i.e. the hydrolysis of glutathionylspermidine (Gsp) back to glutathione and spermidine. The amidase active site can also hydrolyze Gsp-disulfide (Gsp-S-S-Gsp) to Gsp-SG and Gsp S-thiolated proteins (GspSSPs) to GSH S-thiolated protein (GSSPs). Likely acts synergistically with glutaredoxin to regulate the redox environment of E.coli and defend against oxidative damage. In vitro, the amidase active site also catalyzes hydrolysis of amide and ester derivatives of glutathione (e.g. glutathione ethyl ester and glutathione amide) but lacks activity toward acetylspermidine (N1 and N8) and acetylspermine (N1). This is Bifunctional glutathionylspermidine synthetase/amidase (gss) from Escherichia coli (strain K12).